The primary structure comprises 203 residues: VEL1-related protein SPBPB2B2.15 (203 aa).

Residues 1 to 16 (MFKNLIFLFFIGLATA) form the signal peptide.

The protein belongs to the VEL1 family.

The protein localises to the cytoplasm. It is found in the cytosol. The sequence is that of VEL1-related protein SPBPB2B2.15 from Schizosaccharomyces pombe (strain 972 / ATCC 24843) (Fission yeast).